The following is a 567-amino-acid chain: Urease subunit alpha (567 aa).

One can recognise a Urease domain in the interval 129–567 (GGIDSHIHFI…LPMAQRYFLF (439 aa)). 3 residues coordinate Ni(2+): H134, H136, and K217. An N6-carboxylysine modification is found at K217. Substrate is bound at residue H219. Residues H246 and H272 each contribute to the Ni(2+) site. H320 (proton donor) is an active-site residue. A Ni(2+)-binding site is contributed by D360.

It belongs to the metallo-dependent hydrolases superfamily. Urease alpha subunit family. Heterotrimer of UreA (gamma), UreB (beta) and UreC (alpha) subunits. Three heterotrimers associate to form the active enzyme. Requires Ni cation as cofactor. In terms of processing, carboxylation allows a single lysine to coordinate two nickel ions.

It localises to the cytoplasm. The enzyme catalyses urea + 2 H2O + H(+) = hydrogencarbonate + 2 NH4(+). It functions in the pathway nitrogen metabolism; urea degradation; CO(2) and NH(3) from urea (urease route): step 1/1. The chain is Urease subunit alpha from Alcanivorax borkumensis (strain ATCC 700651 / DSM 11573 / NCIMB 13689 / SK2).